We begin with the raw amino-acid sequence, 540 residues long: Cobalt-factor III methyltransferase (540 aa).

4 residues coordinate [4Fe-4S] cluster: cysteine 402, cysteine 405, cysteine 439, and cysteine 443.

In the N-terminal section; belongs to the precorrin methyltransferase family. The cofactor is [4Fe-4S] cluster.

The enzyme catalyses Co(II)-factor III + AH2 + S-adenosyl-L-methionine = Co-precorrin-4 + A + S-adenosyl-L-homocysteine. The protein operates within cofactor biosynthesis; adenosylcobalamin biosynthesis. Functionally, methyltransferase that catalyzes the reduction, ring contraction and methylation of C-17 in cobalt-factor III to form cobalt-precorrin-4. Is also able to convert cobalt-precorrin-3 to cobalt-precorrin-4. The chain is Cobalt-factor III methyltransferase (cbiH60) from Priestia megaterium (Bacillus megaterium).